Consider the following 214-residue polypeptide: Acyl-homoserine-lactone synthase (214 aa).

It belongs to the autoinducer synthase family.

The catalysed reaction is a fatty acyl-[ACP] + S-adenosyl-L-methionine = an N-acyl-L-homoserine lactone + S-methyl-5'-thioadenosine + holo-[ACP] + H(+). Required for the synthesis of autoinducer molecules such as OHHL (N-(3-oxohexanoyl)-L-homoserine lactone), and HHL (N-hexanoyl-L-homoserine lactone). The protein is Acyl-homoserine-lactone synthase (yenI) of Yersinia enterocolitica.